A 268-amino-acid chain; its full sequence is Shikimate dehydrogenase (NADP(+)) (268 aa).

Residues 13–15 (SLS) and T60 contribute to the shikimate site. K64 serves as the catalytic Proton acceptor. An NADP(+)-binding site is contributed by E76. Shikimate is bound by residues N85 and D100. Residues 124 to 128 (GAGGA), 148 to 153 (NRTMAR), and I209 contribute to the NADP(+) site. Position 211 (Y211) interacts with shikimate. G232 contacts NADP(+).

The protein belongs to the shikimate dehydrogenase family. As to quaternary structure, homodimer.

It carries out the reaction shikimate + NADP(+) = 3-dehydroshikimate + NADPH + H(+). It participates in metabolic intermediate biosynthesis; chorismate biosynthesis; chorismate from D-erythrose 4-phosphate and phosphoenolpyruvate: step 4/7. Its function is as follows. Involved in the biosynthesis of the chorismate, which leads to the biosynthesis of aromatic amino acids. Catalyzes the reversible NADPH linked reduction of 3-dehydroshikimate (DHSA) to yield shikimate (SA). This chain is Shikimate dehydrogenase (NADP(+)), found in Staphylococcus aureus (strain JH1).